Consider the following 287-residue polypeptide: Cyclopropane mycolic acid synthase MmaA2 (287 aa).

Residues 33 to 34 (YS), 72 to 74 (GCG), 94 to 99 (TLSKNQ), 123 to 124 (WE), and isoleucine 136 contribute to the S-adenosyl-L-methionine site. Residue cysteine 269 is part of the active site.

Belongs to the CFA/CMAS family.

The catalysed reaction is a 1-acyl-2-(9Z)-enoyl-sn-glycero-3-phospholipid + S-adenosyl-L-methionine = a 1-acyl-2-(9-cyclopronane)-acyl-sn-glycero-3-phospholipid + S-adenosyl-L-homocysteine + H(+). It participates in lipid metabolism; mycolic acid biosynthesis. In terms of biological role, catalyzes the conversion of a double bond to a cis cyclopropane ring at the distal position of an alpha mycolic acid via the transfer of a methylene group from S-adenosyl-L-methionine. MmaA2 also catalyzes the biosynthesis of the cis-cyclopropanated methoxymycolates. Cyclopropanated mycolic acids are key factors participating in cell envelope permeability, host immunomodulation and persistence. This chain is Cyclopropane mycolic acid synthase MmaA2 (cmaC), found in Mycobacterium bovis (strain ATCC BAA-935 / AF2122/97).